The chain runs to 116 residues: Cysteine-rich venom protein Cau1 (116 aa).

The SCP domain occupies 4-42 (SYAVVGHYTQIVWYKSDRIGCAAAYCPSSVYNYFYVCQY). 5 disulfide bridges follow: C24/C40, C62/C69, C65/C74, C87/C105, and C96/C109. The ShKT domain occupies 78-111 (CRVEDEFINCKDMAESRDCQDNYMMTNCAAFCSC).

It belongs to the CRISP family. Expressed by the venom gland.

Its subcellular location is the secreted. In terms of biological role, blocks contraction of smooth muscle elicited by high potassium-induced depolarization, but does not block caffeine-stimulated contraction. May target voltage-gated calcium channels on smooth muscle. The sequence is that of Cysteine-rich venom protein Cau1 from Causus rhombeatus (Rhombic night adder).